A 363-amino-acid polypeptide reads, in one-letter code: MIIDTPEVQDINSFSRLEYLKEVYGIIWMLVPIFTPVLGITIGVLAIVWLEREISAGIQQRIGPEYAGPLGILQALADGTKLLFKENLLPSRGDTRLFSIGPSIAVISILLSYLIIPFGSNLVLSDLNIGVFLWIAISSIAPIGLLMSGYGSNNKYSFLGGLRAAAQSISYEIPLTLCVLSISLLSNSSSTVDIVEAQSKYGFWGWNLWRQPIGFIVFLISSLAECERLPFDLPEAEEELVAGYQTEYSGIKFGLFYVASYLNLLVSSLFVTVLYLGGWDLSIPYIFVPEFFEINKAGEVFGTTIGIFITLAKTYLFLFIPITTRWTLPRLRMDQLLNLGWKFLLPISLGNLLLTTSSQLLSL.

A run of 6 helical transmembrane segments spans residues 30–50 (LVPIFTPVLGITIGVLAIVWL), 98–118 (FSIGPSIAVISILLSYLIIPF), 129–149 (IGVFLWIAISSIAPIGLLMSG), 248–268 (YSGIKFGLFYVASYLNLLVSS), 300–320 (VFGTTIGIFITLAKTYLFLFI), and 336–356 (LLNLGWKFLLPISLGNLLLTT).

The protein belongs to the complex I subunit 1 family. NDH is composed of at least 16 different subunits, 5 of which are encoded in the nucleus.

The protein resides in the plastid. It localises to the chloroplast thylakoid membrane. The catalysed reaction is a plastoquinone + NADH + (n+1) H(+)(in) = a plastoquinol + NAD(+) + n H(+)(out). It carries out the reaction a plastoquinone + NADPH + (n+1) H(+)(in) = a plastoquinol + NADP(+) + n H(+)(out). NDH shuttles electrons from NAD(P)H:plastoquinone, via FMN and iron-sulfur (Fe-S) centers, to quinones in the photosynthetic chain and possibly in a chloroplast respiratory chain. The immediate electron acceptor for the enzyme in this species is believed to be plastoquinone. Couples the redox reaction to proton translocation, and thus conserves the redox energy in a proton gradient. The chain is NAD(P)H-quinone oxidoreductase subunit 1, chloroplastic from Vitis vinifera (Grape).